A 187-amino-acid polypeptide reads, in one-letter code: Ribosome-recycling factor (187 aa).

Belongs to the RRF family.

It is found in the cytoplasm. Responsible for the release of ribosomes from messenger RNA at the termination of protein biosynthesis. May increase the efficiency of translation by recycling ribosomes from one round of translation to another. The chain is Ribosome-recycling factor from Mycoplasmopsis pulmonis (strain UAB CTIP) (Mycoplasma pulmonis).